The chain runs to 241 residues: Uridylate kinase (241 aa).

15–18 lines the ATP pocket; sequence KMSG. The interval 23-28 is involved in allosteric activation by GTP; it reads GAEGFG. G57 is a UMP binding site. Positions 58 and 62 each coordinate ATP. UMP is bound by residues D77 and 138–145; that span reads TGNPLFTT. ATP is bound by residues T165, F171, and D174.

The protein belongs to the UMP kinase family. Homohexamer.

The protein resides in the cytoplasm. The catalysed reaction is UMP + ATP = UDP + ADP. It participates in pyrimidine metabolism; CTP biosynthesis via de novo pathway; UDP from UMP (UMPK route): step 1/1. Its activity is regulated as follows. Allosterically activated by GTP. Inhibited by UTP. In terms of biological role, catalyzes the reversible phosphorylation of UMP to UDP. This Blochmanniella pennsylvanica (strain BPEN) protein is Uridylate kinase.